A 431-amino-acid polypeptide reads, in one-letter code: Adenylosuccinate synthetase (431 aa).

GTP contacts are provided by residues 13–19 (GDEGKGK) and 41–43 (GHT). Aspartate 14 functions as the Proton acceptor in the catalytic mechanism. Positions 14 and 41 each coordinate Mg(2+). Residues 14–17 (DEGK), 39–42 (NAGH), threonine 130, arginine 144, glutamine 225, threonine 240, and arginine 304 each bind IMP. The Proton donor role is filled by histidine 42. 300-306 (ATTGRAR) serves as a coordination point for substrate. GTP-binding positions include arginine 306, 332–334 (KLD), and 414–416 (STG).

This sequence belongs to the adenylosuccinate synthetase family. In terms of assembly, homodimer. Requires Mg(2+) as cofactor.

The protein localises to the cytoplasm. The enzyme catalyses IMP + L-aspartate + GTP = N(6)-(1,2-dicarboxyethyl)-AMP + GDP + phosphate + 2 H(+). It functions in the pathway purine metabolism; AMP biosynthesis via de novo pathway; AMP from IMP: step 1/2. Its function is as follows. Plays an important role in the de novo pathway of purine nucleotide biosynthesis. Catalyzes the first committed step in the biosynthesis of AMP from IMP. In Chromohalobacter salexigens (strain ATCC BAA-138 / DSM 3043 / CIP 106854 / NCIMB 13768 / 1H11), this protein is Adenylosuccinate synthetase.